Reading from the N-terminus, the 556-residue chain is Formate--tetrahydrofolate ligase (556 aa).

Residue 65–72 (TPAGEGKS) participates in ATP binding.

It belongs to the formate--tetrahydrofolate ligase family.

It carries out the reaction (6S)-5,6,7,8-tetrahydrofolate + formate + ATP = (6R)-10-formyltetrahydrofolate + ADP + phosphate. It participates in one-carbon metabolism; tetrahydrofolate interconversion. The protein is Formate--tetrahydrofolate ligase of Streptococcus agalactiae serotype III (strain NEM316).